We begin with the raw amino-acid sequence, 74 residues long: Chitinases 70, 30, and 20.5 kDa (74 aa).

The segment at 1–27 (XTSATATYAKTQDWGSCFEGKWTIKNT) is N-terminus of 70 kDa chitinase. The interval 28–52 (AACSSYPSWVAGRSYAAGDIVYYTD) is N-terminus of 30 kDa chitinase. The interval 53-74 (XGYTDLPVSRQKMCQNGMVTNC) is N-terminus of 20.5 kDa chitinase.

This sequence belongs to the glycosyl hydrolase 18 family. Chitinase class II subfamily. Homodimer, but homotrimers and homotetramers could be observed for the 20.5 and 30 kDa chitinases. The 70 kDa chitinase is probably the precursor protein of the 30 and 20.5 kDa chitinases.

It catalyses the reaction Random endo-hydrolysis of N-acetyl-beta-D-glucosaminide (1-&gt;4)-beta-linkages in chitin and chitodextrins.. Its function is as follows. Able to cleave chitin oligomers from N=3 to 6. The sequence is that of Chitinases 70, 30, and 20.5 kDa from Streptomyces olivaceoviridis (Streptomyces corchorusii).